The following is an 889-amino-acid chain: Alanine--tRNA ligase (889 aa).

Histidine 564, histidine 568, cysteine 671, and histidine 675 together coordinate Zn(2+).

The protein belongs to the class-II aminoacyl-tRNA synthetase family. Requires Zn(2+) as cofactor.

The protein localises to the cytoplasm. It catalyses the reaction tRNA(Ala) + L-alanine + ATP = L-alanyl-tRNA(Ala) + AMP + diphosphate. Its function is as follows. Catalyzes the attachment of alanine to tRNA(Ala) in a two-step reaction: alanine is first activated by ATP to form Ala-AMP and then transferred to the acceptor end of tRNA(Ala). Also edits incorrectly charged Ser-tRNA(Ala) and Gly-tRNA(Ala) via its editing domain. The sequence is that of Alanine--tRNA ligase from Pelagibacter ubique (strain HTCC1062).